Here is a 514-residue protein sequence, read N- to C-terminus: ATP synthase subunit alpha (514 aa).

Residue 170-177 (GDRQIGKT) coordinates ATP.

It belongs to the ATPase alpha/beta chains family. F-type ATPases have 2 components, CF(1) - the catalytic core - and CF(0) - the membrane proton channel. CF(1) has five subunits: alpha(3), beta(3), gamma(1), delta(1), epsilon(1). CF(0) has three main subunits: a(1), b(2) and c(9-12). The alpha and beta chains form an alternating ring which encloses part of the gamma chain. CF(1) is attached to CF(0) by a central stalk formed by the gamma and epsilon chains, while a peripheral stalk is formed by the delta and b chains.

The protein resides in the cell inner membrane. The enzyme catalyses ATP + H2O + 4 H(+)(in) = ADP + phosphate + 5 H(+)(out). Its function is as follows. Produces ATP from ADP in the presence of a proton gradient across the membrane. The alpha chain is a regulatory subunit. The chain is ATP synthase subunit alpha from Pseudomonas fluorescens (strain ATCC BAA-477 / NRRL B-23932 / Pf-5).